The chain runs to 622 residues: Glucose 1,6-bisphosphate synthase (622 aa).

Alpha-D-glucose 1,6-bisphosphate contacts are provided by Arg73 and Ser175. Catalysis depends on Ser175, which acts as the Phosphoserine intermediate. Mg(2+)-binding residues include Ser175, Asp332, and Asp334. The residue at position 175 (Ser175) is a Phosphoserine. Residues Asp336, Arg337, Glu434, Ser436, and Lys448 each contribute to the alpha-D-glucose 1,6-bisphosphate site.

The protein belongs to the phosphohexose mutase family.

Its subcellular location is the cytoplasm. The protein localises to the cytosol. The catalysed reaction is (2R)-3-phospho-glyceroyl phosphate + alpha-D-glucose 1-phosphate = alpha-D-glucose 1,6-bisphosphate + (2R)-3-phosphoglycerate + H(+). The enzyme catalyses alpha-D-glucose 6-phosphate + (2R)-3-phospho-glyceroyl phosphate = alpha-D-glucose 1,6-bisphosphate + (2R)-3-phosphoglycerate + H(+). It carries out the reaction (2R)-3-phospho-glyceroyl phosphate + alpha-D-ribose 1-phosphate = alpha-D-ribose 1,5-bisphosphate + (2R)-3-phosphoglycerate + H(+). It catalyses the reaction 2-deoxy-alpha-D-ribose 1-phosphate + (2R)-3-phospho-glyceroyl phosphate = 2-deoxy-alpha-D-ribose 1,5-bisphosphate + (2R)-3-phosphoglycerate + H(+). The catalysed reaction is (2R)-3-phospho-glyceroyl phosphate + alpha-D-mannose 1-phosphate = alpha-D-mannose 1,6-bisphosphate + (2R)-3-phosphoglycerate + H(+). Glucose 1,6-bisphosphate synthase using 1,3-bisphosphoglycerate as a phosphate donor and a series of 1-phosphate sugars, including glucose 1-phosphate, mannose 1-phosphate, ribose 1-phosphate and deoxyribose 1-phosphate, as acceptors. In vitro, also exhibits very low phosphopentomutase and phosphoglucomutase activity which are most probably not physiologically relevant. In Homo sapiens (Human), this protein is Glucose 1,6-bisphosphate synthase.